We begin with the raw amino-acid sequence, 123 residues long: Fluoride-specific ion channel FluC (123 aa).

Transmembrane regions (helical) follow at residues 4–24, 31–51, 64–83, and 100–120; these read VYIAIFGALGCLSRFMVSGWV, ALPYGTLAVNVIGSLLLGLLM, IRMGITTGFMGGFTTFSTFS, and ANILLNVTVSVVFAGLGIFLA. Na(+)-binding residues include G74 and T77.

This sequence belongs to the fluoride channel Fluc/FEX (TC 1.A.43) family.

The protein resides in the cell inner membrane. It catalyses the reaction fluoride(in) = fluoride(out). With respect to regulation, na(+) is not transported, but it plays an essential structural role and its presence is essential for fluoride channel function. In terms of biological role, fluoride-specific ion channel. Important for reducing fluoride concentration in the cell, thus reducing its toxicity. This chain is Fluoride-specific ion channel FluC, found in Syntrophotalea carbinolica (strain DSM 2380 / NBRC 103641 / GraBd1) (Pelobacter carbinolicus).